The sequence spans 161 residues: Capsid protein (161 aa).

Belongs to the virgaviridae capsid protein family.

Its subcellular location is the virion. In terms of biological role, capsid protein self-assembles to form rod-shaped virions about 18 nm in diameter with a central canal enclosing the viral genomic RNA. In Tobamovirus Ob, this protein is Capsid protein (CP).